Reading from the N-terminus, the 358-residue chain is Probable branched-chain-amino-acid aminotransferase (358 aa).

Residue Lys196 is modified to N6-(pyridoxal phosphate)lysine.

Belongs to the class-IV pyridoxal-phosphate-dependent aminotransferase family. Pyridoxal 5'-phosphate serves as cofactor.

It carries out the reaction L-leucine + 2-oxoglutarate = 4-methyl-2-oxopentanoate + L-glutamate. It catalyses the reaction L-isoleucine + 2-oxoglutarate = (S)-3-methyl-2-oxopentanoate + L-glutamate. The enzyme catalyses L-valine + 2-oxoglutarate = 3-methyl-2-oxobutanoate + L-glutamate. It functions in the pathway amino-acid biosynthesis; L-isoleucine biosynthesis; L-isoleucine from 2-oxobutanoate: step 4/4. The protein operates within amino-acid biosynthesis; L-leucine biosynthesis; L-leucine from 3-methyl-2-oxobutanoate: step 4/4. Its pathway is amino-acid biosynthesis; L-valine biosynthesis; L-valine from pyruvate: step 4/4. Functionally, acts on leucine, isoleucine and valine. This chain is Probable branched-chain-amino-acid aminotransferase (ilvE), found in Staphylococcus epidermidis (strain ATCC 35984 / DSM 28319 / BCRC 17069 / CCUG 31568 / BM 3577 / RP62A).